A 309-amino-acid polypeptide reads, in one-letter code: Sulfate adenylyltransferase subunit 2 (309 aa).

The protein belongs to the PAPS reductase family. CysD subfamily. As to quaternary structure, heterodimer composed of CysD, the smaller subunit, and CysN.

It carries out the reaction sulfate + ATP + H(+) = adenosine 5'-phosphosulfate + diphosphate. It participates in sulfur metabolism; hydrogen sulfide biosynthesis; sulfite from sulfate: step 1/3. With CysN forms the ATP sulfurylase (ATPS) that catalyzes the adenylation of sulfate producing adenosine 5'-phosphosulfate (APS) and diphosphate, the first enzymatic step in sulfur assimilation pathway. APS synthesis involves the formation of a high-energy phosphoric-sulfuric acid anhydride bond driven by GTP hydrolysis by CysN coupled to ATP hydrolysis by CysD. This Mycolicibacterium vanbaalenii (strain DSM 7251 / JCM 13017 / BCRC 16820 / KCTC 9966 / NRRL B-24157 / PYR-1) (Mycobacterium vanbaalenii) protein is Sulfate adenylyltransferase subunit 2.